The chain runs to 543 residues: ATP synthase subunit alpha (543 aa).

Residue 174–181 (GDRQTGKT) participates in ATP binding.

This sequence belongs to the ATPase alpha/beta chains family. F-type ATPases have 2 components, CF(1) - the catalytic core - and CF(0) - the membrane proton channel. CF(1) has five subunits: alpha(3), beta(3), gamma(1), delta(1), epsilon(1). CF(0) has three main subunits: a(1), b(2) and c(9-12). The alpha and beta chains form an alternating ring which encloses part of the gamma chain. CF(1) is attached to CF(0) by a central stalk formed by the gamma and epsilon chains, while a peripheral stalk is formed by the delta and b chains.

It is found in the cell membrane. It catalyses the reaction ATP + H2O + 4 H(+)(in) = ADP + phosphate + 5 H(+)(out). Its function is as follows. Produces ATP from ADP in the presence of a proton gradient across the membrane. The alpha chain is a regulatory subunit. The polypeptide is ATP synthase subunit alpha (Bifidobacterium longum subsp. infantis (strain ATCC 15697 / DSM 20088 / JCM 1222 / NCTC 11817 / S12)).